Consider the following 88-residue polypeptide: MSKNLFMDLSSISEKEKGSVEFQIFRLTNRVVKLTYHFKKHGKDYSSQRGLWKILGKRKRLLAYLFKTNFVSYENLIIQLGIRGLKKN.

It belongs to the universal ribosomal protein uS15 family. As to quaternary structure, part of the 30S ribosomal subunit.

Its subcellular location is the plastid. It is found in the chloroplast. This is Small ribosomal subunit protein uS15c (rps15) from Marchantia polymorpha (Common liverwort).